Consider the following 211-residue polypeptide: MADAVLEARELGVRRGHCAIFRGLGISLAPGDLLQVMGPNGAGKTSLLRVLSSLMPPAEGDLYWRGRAVRAGDPDYLAQVAYLGHVNGIYPDLSAFENLQFAARMAGQQPDADAMHHALARFGLDRVADAPARTLSQGQRRRVALSRLALTPRALWLLDEPLTSLDDASTDCFHTLLAEHLQRGGIAVVATHQRLPAEGAVLDLATDAGSP.

The region spanning 6-208 (LEARELGVRR…GAVLDLATDA (203 aa)) is the ABC transporter domain. Residue 38–45 (GPNGAGKT) participates in ATP binding.

Belongs to the ABC transporter superfamily. CcmA exporter (TC 3.A.1.107) family. The complex is composed of two ATP-binding proteins (CcmA) and two transmembrane proteins (CcmB).

The protein resides in the cell inner membrane. The catalysed reaction is heme b(in) + ATP + H2O = heme b(out) + ADP + phosphate + H(+). Functionally, part of the ABC transporter complex CcmAB involved in the biogenesis of c-type cytochromes; once thought to export heme, this seems not to be the case, but its exact role is uncertain. Responsible for energy coupling to the transport system. The protein is Cytochrome c biogenesis ATP-binding export protein CcmA 2 of Cupriavidus metallidurans (strain ATCC 43123 / DSM 2839 / NBRC 102507 / CH34) (Ralstonia metallidurans).